A 101-amino-acid polypeptide reads, in one-letter code: Signal recognition particle 19 kDa protein (101 aa).

This sequence belongs to the SRP19 family. Part of the signal recognition particle protein translocation system, which is composed of SRP and FtsY. Archaeal SRP consists of a 7S RNA molecule of 300 nucleotides and two protein subunits: SRP54 and SRP19.

It localises to the cytoplasm. Involved in targeting and insertion of nascent membrane proteins into the cytoplasmic membrane. Binds directly to 7S RNA and mediates binding of the 54 kDa subunit of the SRP. The polypeptide is Signal recognition particle 19 kDa protein (Methanosarcina mazei (strain ATCC BAA-159 / DSM 3647 / Goe1 / Go1 / JCM 11833 / OCM 88) (Methanosarcina frisia)).